The chain runs to 646 residues: Long-chain fatty acid transport protein 1 (646 aa).

At 1–13 the chain is on the extracellular side; it reads MRAPGAGAASVVS. Residues 14 to 34 form a helical membrane-spanning segment; sequence LALLWLLGLPWTWSAAAALGV. Topologically, residues 35-646 are cytoplasmic; the sequence is YVGSGGWRFL…TRICSGAFAL (612 aa). Positions 191–475 are sufficient for oligomerization; the sequence is EVSGHLGKSL…YVSESATSKK (285 aa). 246-257 is an AMP binding site; the sequence is YIYTSGTTGLPK.

Belongs to the ATP-dependent AMP-binding enzyme family. As to quaternary structure, self-associates. May function as a homodimer. Interacts with EPRS1; mediates the translocation of SLC27A1 from the cytoplasm to the plasma membrane thereby increasing the uptake of long-chain fatty acids. Interacts with DGAT2 and this interaction is enhanced in the presence of ZFYVE1. As to expression, highest levels of expression are detected in muscle and adipose tissue small, intermediate levels in small intestine, and barely detectable in liver. Expressed in brain gray matter.

It is found in the cell membrane. The protein localises to the endomembrane system. Its subcellular location is the cytoplasm. It catalyses the reaction a fatty acid(in) = a fatty acid(out). It carries out the reaction (9Z)-octadecenoate(out) = (9Z)-octadecenoate(in). The enzyme catalyses hexadecanoate(out) = hexadecanoate(in). The catalysed reaction is (9Z,12Z)-octadecadienoate(out) = (9Z,12Z)-octadecadienoate(in). It catalyses the reaction (5Z,8Z,11Z,14Z)-eicosatetraenoate(out) = (5Z,8Z,11Z,14Z)-eicosatetraenoate(in). It carries out the reaction a long-chain fatty acid + ATP + CoA = a long-chain fatty acyl-CoA + AMP + diphosphate. The enzyme catalyses (5Z,8Z,11Z,14Z)-eicosatetraenoate + ATP + CoA = (5Z,8Z,11Z,14Z)-eicosatetraenoyl-CoA + AMP + diphosphate. The catalysed reaction is a very long-chain fatty acid + ATP + CoA = a very long-chain fatty acyl-CoA + AMP + diphosphate. It catalyses the reaction tetracosanoate + ATP + CoA = tetracosanoyl-CoA + AMP + diphosphate. Its activity is regulated as follows. Inhibited by Triacsin C. In terms of biological role, mediates the import of long-chain fatty acids (LCFA) into the cell by facilitating their transport at the plasma membrane. Also functions as an acyl-CoA ligase catalyzing the ATP-dependent formation of fatty acyl-CoA using LCFA and very-long-chain fatty acids (VLCFA) as substrates, which prevents fatty acid efflux from cells and might drive more fatty acid uptake. May act directly as a bona fide transporter, or alternatively, in a cytoplasmic or membrane-associated multimeric protein complex to trap and draw fatty acids towards accumulation. Plays a pivotal role in regulating available LCFA substrates from exogenous sources in tissues undergoing high levels of beta-oxidation or triglyceride synthesis. May be involved in regulation of cholesterol metabolism. Probably involved in fatty acid transport across the blood barrier. This is Long-chain fatty acid transport protein 1 from Homo sapiens (Human).